The primary structure comprises 322 residues: Ras association domain-containing protein 4 (322 aa).

The segment at Glu-96 to Gln-161 is disordered. Residue Ser-142 is modified to Phosphoserine. The 90-residue stretch at Tyr-175–Ser-264 folds into the Ras-associating domain. The region spanning Val-271–Leu-318 is the SARAH domain.

In terms of assembly, interacts directly with activated KRAS in a GTP-dependent manner.

Potential tumor suppressor. May act as a KRAS effector protein. May promote apoptosis and cell cycle arrest. In Mus musculus (Mouse), this protein is Ras association domain-containing protein 4 (Rassf4).